The sequence spans 350 residues: Eukaryotic translation initiation factor 3 subunit I (350 aa).

WD repeat units lie at residues 8–49, 51–89, 91–135, 149–188, 198–240, and 296–335; these read GHER…GTLE, HQGVIWSIDVDPDTHLCATGGGDLAIKLWKVETGKCVFT, ESPS…ESLT, QDGAKATVAGWSANGEFIISGHDDGYIYKYDAQTGEAVNS, EKNV…KVYK, and GHFGPLNTVAVHPDGTGYSSGGEDGFIRVHTFDKSYFDFY.

Belongs to the eIF-3 subunit I family. Component of the eukaryotic translation initiation factor 3 (eIF-3) complex.

The protein localises to the cytoplasm. Functionally, component of the eukaryotic translation initiation factor 3 (eIF-3) complex, which is involved in protein synthesis of a specialized repertoire of mRNAs and, together with other initiation factors, stimulates binding of mRNA and methionyl-tRNAi to the 40S ribosome. The eIF-3 complex specifically targets and initiates translation of a subset of mRNAs involved in cell proliferation. The polypeptide is Eukaryotic translation initiation factor 3 subunit I (Scheffersomyces stipitis (strain ATCC 58785 / CBS 6054 / NBRC 10063 / NRRL Y-11545) (Yeast)).